The primary structure comprises 84 residues: Beta-defensin 119 (84 aa).

The first 21 residues, 1-21 (MKLLYLFLAILLAIEEPVISG), serve as a signal peptide directing secretion. 3 cysteine pairs are disulfide-bonded: Cys28–Cys55, Cys35–Cys49, and Cys39–Cys56.

This sequence belongs to the beta-defensin family. As to expression, abundant expression in the male reproductive tract only. Abundant expressed in testis and the caput region of epididymis, but low in the corpus region.

It localises to the secreted. In terms of biological role, has antibacterial activity. In Homo sapiens (Human), this protein is Beta-defensin 119 (DEFB119).